A 238-amino-acid chain; its full sequence is Ribonuclease PH (238 aa).

Phosphate-binding positions include arginine 86 and glycine 124 to arginine 126.

It belongs to the RNase PH family. As to quaternary structure, homohexameric ring arranged as a trimer of dimers.

The catalysed reaction is tRNA(n+1) + phosphate = tRNA(n) + a ribonucleoside 5'-diphosphate. In terms of biological role, phosphorolytic 3'-5' exoribonuclease that plays an important role in tRNA 3'-end maturation. Removes nucleotide residues following the 3'-CCA terminus of tRNAs; can also add nucleotides to the ends of RNA molecules by using nucleoside diphosphates as substrates, but this may not be physiologically important. Probably plays a role in initiation of 16S rRNA degradation (leading to ribosome degradation) during starvation. This is Ribonuclease PH from Histophilus somni (strain 129Pt) (Haemophilus somnus).